Here is a 1021-residue protein sequence, read N- to C-terminus: Sodium/potassium-transporting ATPase subunit alpha-1 (1021 aa).

Positions 1-5 (MGKGV) are excised as a propeptide. Positions 1 to 11 (MGKGVGRDKYE) are enriched in basic and acidic residues. Residues 1–36 (MGKGVGRDKYEPAAVSEHGDKKKAKKERDMDELKKE) form a disordered region. The Cytoplasmic segment spans residues 4-85 (GVGRDKYEPA…NALTPPPTTP (82 aa)). Position 9 is an N6-acetyllysine (K9). Y10 carries the post-translational modification Phosphotyrosine. S16 is subject to Phosphoserine; by PKC. An N6-acetyllysine modification is found at K21. A compositionally biased stretch (basic and acidic residues) spans 26–36 (KERDMDELKKE). 2 positions are modified to phosphoserine: S38 and S45. The tract at residues 80–82 (PPP) is phosphoinositide-3 kinase binding. A helical membrane pass occupies residues 86–106 (EWVKFCRQLFGGFSMLLWIGA). Topologically, residues 107 to 129 (ILCFLAYGIQAATEEEPQNDNLY) are extracellular. Residues 130-150 (LGVVLSAVVIITGCFSYYQEA) form a helical membrane-spanning segment. Topologically, residues 151 to 286 (KSSKIMESFK…GGQTPIAAEI (136 aa)) are cytoplasmic. A disordered region spans residues 214 to 233 (SSLTGESEPQTRSPDFTNEN). A Phosphoserine modification is found at S226. Y258 carries the post-translational modification Phosphotyrosine. The chain crosses the membrane as a helical span at residues 287-306 (EHFIHIITGVAVFLGVSFFI). Residues 307-318 (LSLILEYTWLEA) are Extracellular-facing. Residues 319 to 336 (VIFLIGIIVANVPEGLLA) form a helical membrane-spanning segment. Residues 337 to 770 (TVTVCLTLTA…EEGRLIFDNL (434 aa)) lie on the Cytoplasmic side of the membrane. Catalysis depends on D374, which acts as the 4-aspartylphosphate intermediate. Residues S450 and S482 each carry the phosphoserine modification. K485 contacts ATP. Y540 is modified (phosphotyrosine). The segment at 594-715 (RAAVPDAVGK…QGAIVAVTGD (122 aa)) is mediates interaction with SCN7A. K659 bears the N6-succinyllysine mark. Phosphoserine occurs at positions 666 and 673. Residues D715 and D719 each coordinate Mg(2+). Residues 771-790 (KKSIAYTLTSNIPEITPFLI) form a helical membrane-spanning segment. Over 791–800 (FIIANIPLPL) the chain is Extracellular. The helical transmembrane segment at 801-821 (GTVTILCIDLGTDMVPAISLA) threads the bilayer. Residues 822-841 (YEQAESDIMKRQPRNPKTDK) are Cytoplasmic-facing. Residues 842–864 (LVNERLISMAYGQIGMIQALGGF) traverse the membrane as a helical segment. The Extracellular segment spans residues 865–916 (FTYFVILAENGFLPTHLLGLRVDWDDRWINDVEDSYGQQWTYEQRKIVEFTC). A helical transmembrane segment spans residues 917–936 (HTAFFVSIVVVQWADLVICK). Residues 937–949 (TRRNSVFQQGMKN) are Cytoplasmic-facing. Position 941 is a phosphoserine; by PKA (S941). Residues 950 to 968 (KILIFGLFEETALAAFLSY) traverse the membrane as a helical segment. The Extracellular portion of the chain corresponds to 969-983 (CPGMGVALRMYPLKP). Residues 984–1004 (TWWFCAFPYSLLIFVYDEVRK) form a helical membrane-spanning segment. Topologically, residues 1005-1021 (LIIRRRPGGWVEKETYY) are cytoplasmic.

It belongs to the cation transport ATPase (P-type) (TC 3.A.3) family. Type IIC subfamily. The sodium/potassium-transporting ATPase is composed of a catalytic alpha subunit, an auxiliary non-catalytic beta subunit and an additional regulatory subunit. Interacts with regulatory subunit FXYD1. Interacts with regulatory subunit FXYD3. Interacts with SIK1. Interacts with SLC35G1 and STIM1. Interacts with CLN3; this interaction regulates the sodium/potassium-transporting ATPase complex localization at the plasma membrane. Interacts with SCN7A; activates ATP1A1 P-type sodium:potassium-exchanging transporter activity which indirectly signals to nearby neurons to regulate sodium homeostasis. In terms of processing, phosphorylation on Tyr-10 modulates pumping activity. Phosphorylation of Ser-941 by PKA modulates the response of ATP1A1 to PKC. Dephosphorylation by protein phosphatase 2A (PP2A) following increases in intracellular sodium, leading to increase catalytic activity.

The protein localises to the cell membrane. Its subcellular location is the basolateral cell membrane. It localises to the sarcolemma. The protein resides in the cell projection. It is found in the axon. The protein localises to the melanosome. It catalyses the reaction K(+)(out) + Na(+)(in) + ATP + H2O = K(+)(in) + Na(+)(out) + ADP + phosphate + H(+). This is the catalytic component of the active enzyme, which catalyzes the hydrolysis of ATP coupled with the exchange of sodium and potassium ions across the plasma membrane. This action creates the electrochemical gradient of sodium and potassium ions, providing the energy for active transport of various nutrients. Could also be part of an osmosensory signaling pathway that senses body-fluid sodium levels and controls salt intake behavior as well as voluntary water intake to regulate sodium homeostasis. This Canis lupus familiaris (Dog) protein is Sodium/potassium-transporting ATPase subunit alpha-1 (ATP1A1).